Reading from the N-terminus, the 532-residue chain is 2,3-bisphosphoglycerate-independent phosphoglycerate mutase (532 aa).

Residues D15 and S65 each coordinate Mn(2+). Residue S65 is the Phosphoserine intermediate of the active site. Substrate-binding positions include H126, 156–157 (RD), R188, R194, 258–261 (RPDR), and K331. Residues D398, H402, D439, H440, and H457 each coordinate Mn(2+).

Belongs to the BPG-independent phosphoglycerate mutase family. As to quaternary structure, monomer. The cofactor is Mn(2+).

It carries out the reaction (2R)-2-phosphoglycerate = (2R)-3-phosphoglycerate. It functions in the pathway carbohydrate degradation; glycolysis; pyruvate from D-glyceraldehyde 3-phosphate: step 3/5. Its function is as follows. Catalyzes the interconversion of 2-phosphoglycerate and 3-phosphoglycerate. This Gloeothece citriformis (strain PCC 7424) (Cyanothece sp. (strain PCC 7424)) protein is 2,3-bisphosphoglycerate-independent phosphoglycerate mutase.